The primary structure comprises 178 residues: Dual-action ribosomal maturation protein DarP (178 aa).

Residues 1-14 show a composition bias toward polar residues; it reads MTVSDHPQTVSQPD. Residues 1-25 are disordered; the sequence is MTVSDHPQTVSQPDPESESRPSKTR.

The protein belongs to the DarP family.

Its subcellular location is the cytoplasm. Member of a network of 50S ribosomal subunit biogenesis factors which assembles along the 30S-50S interface, preventing incorrect 23S rRNA structures from forming. Promotes peptidyl transferase center (PTC) maturation. The chain is Dual-action ribosomal maturation protein DarP from Nitrosomonas europaea (strain ATCC 19718 / CIP 103999 / KCTC 2705 / NBRC 14298).